Here is a 422-residue protein sequence, read N- to C-terminus: MRTSKASVTQTWLLYTQLCLWKDLIIRYVRQIIRRAKSMLFSQNMVADSAEISVIDVKSHLSVAKDPSNFQIAEIRIHDSICIDIPSSEETPLLESIKSCSATTIEEHVTEFVPNISSGSYADKGDYREYMEDEHICIDDLSDHLGSSFYRFPVPMAFYGVFDGHGGSDASQYIKENAMSLFFEDAVFRQSPSVVDSLFLKELETSHREAYRLADLAMEDERIVSSSCGTTALTALVIGRHLMVANVGDCRAVLCRKGKAVDMSFDHKSTFEPERRRVEDLGGYFEGEYLYGDLAVTRALGDWSIKRFSPLGESLSPLISDPDIQQMILTEEDEFLIMGCDGVWDVMTSQYAVTFVRQGLRRHGDPRRCAMELGREALRLDSSDNVTVVVICFSSSPAPQRRRIRFCVSDEARARLQTMLEG.

The region spanning 117–393 is the PPM-type phosphatase domain; the sequence is SSGSYADKGD…DNVTVVVICF (277 aa). Positions 163, 164, 341, and 384 each coordinate Mn(2+).

Belongs to the PP2C family. Mg(2+) serves as cofactor. Mn(2+) is required as a cofactor.

The catalysed reaction is O-phospho-L-seryl-[protein] + H2O = L-seryl-[protein] + phosphate. It carries out the reaction O-phospho-L-threonyl-[protein] + H2O = L-threonyl-[protein] + phosphate. The polypeptide is Probable protein phosphatase 2C 43 (Arabidopsis thaliana (Mouse-ear cress)).